Here is a 532-residue protein sequence, read N- to C-terminus: Arginine--tRNA ligase (532 aa).

The short motif at 122 to 132 is the 'HIGH' region element; that stretch reads ANPTGPLHVAS.

Belongs to the class-I aminoacyl-tRNA synthetase family. As to quaternary structure, monomer.

Its subcellular location is the cytoplasm. The enzyme catalyses tRNA(Arg) + L-arginine + ATP = L-arginyl-tRNA(Arg) + AMP + diphosphate. In Elusimicrobium minutum (strain Pei191), this protein is Arginine--tRNA ligase.